Here is a 325-residue protein sequence, read N- to C-terminus: Lipid droplet-associated hydrolase (325 aa).

Catalysis depends on Ser-139, which acts as the Nucleophile. Active-site charge relay system residues include Asp-271 and His-300.

This sequence belongs to the AB hydrolase superfamily. LDAH family. Present in macrophage-rich areas in atherosclerotic lesions (at protein level). Expressed in monocytes and monocyte-derived macrophages (at protein level).

The protein resides in the lipid droplet. The protein localises to the endoplasmic reticulum. The catalysed reaction is a cholesterol ester + H2O = cholesterol + a fatty acid + H(+). Its function is as follows. Probable serine lipid hydrolase associated with lipid droplets. Has low cholesterol esterase activity. Appears to lack triglyceride lipase activity. Involved in cholesterol and triglyceride homeostasis; has opposing effects, stimulating cellular triglyceride accumulation and cellular cholesterol release. Acts antagonistically with PNPLA2/ATGL in regulation of cellular lipid stores. May regulate triglyceride accumulation indirectly through stimulation of PNPLA2/ATGL ubiquitination and proteasomal degradation. Promotes microtubule-dependent lipid droplet fusion. Highly expressed in macrophage-rich areas in atherosclerotic lesions, suggesting that it could promote cholesterol ester turnover in macrophages. The protein is Lipid droplet-associated hydrolase of Homo sapiens (Human).